The sequence spans 406 residues: Protein transport protein HofC homolog (406 aa).

Transmembrane regions (helical) follow at residues 167-187, 214-234, and 379-399; these read MVLG…VPQF, QNIG…YFYL, and MMVI…LPIF.

This sequence belongs to the GSP F family.

The protein resides in the cell inner membrane. This chain is Protein transport protein HofC homolog (hofC), found in Haemophilus influenzae (strain ATCC 51907 / DSM 11121 / KW20 / Rd).